The chain runs to 365 residues: Validamycin A dioxygenase (365 aa).

The region spanning 174–284 is the Fe2OG dioxygenase domain; the sequence is HATWTQSVNW…LVSLVYFFDA (111 aa). Positions 203, 205, and 261 each coordinate Fe cation. A disordered region spans residues 331–365; the sequence is GELSLSRPGSADSPGSSPADDHPSRPGRHPAQGPQ. Positions 336–348 are enriched in low complexity; it reads SRPGSADSPGSSP.

The protein belongs to the iron/ascorbate-dependent oxidoreductase family. It depends on Fe(2+) as a cofactor.

The enzyme catalyses validamycin A + 2-oxoglutarate + O2 = validamycin B + succinate + CO2 + H(+). It carries out the reaction validoxylamine A + 2-oxoglutarate + O2 = validoxylamine B + succinate + CO2 + H(+). Its pathway is antibiotic biosynthesis. In terms of biological role, involved in the biosynthesis of validamycin B, a component of the antifungal and antibiotic validamycin complex used as a crop protectant. Catalyzes the regioselective hydroxylation of validamycin A (4-O-beta-D-glucopyranosyl-validoxylamine A) at the C-6 position to yield validamycin B. To a lesser extent, also able to convert validoxylamine A to its hydroxylated derivative. In Streptomyces hygroscopicus subsp. limoneus, this protein is Validamycin A dioxygenase.